We begin with the raw amino-acid sequence, 197 residues long: Putative rho GDP-dissociation inhibitor 1 (197 aa).

It belongs to the Rho GDI family. Interacts with rac1A, rac1B, rac1C, racB, raCC and RacE.

Its subcellular location is the cytoplasm. Its function is as follows. Regulates the GDP/GTP exchange reaction of the Rho proteins by inhibiting the dissociation of GDP from them, and the subsequent binding of GTP to them. Regulates the Rac-dependent signaling pathways controlling cytokinesis, actin reorganization and the contractile vacuole. Required for efficient accumulation of cap at the cell cortex. This chain is Putative rho GDP-dissociation inhibitor 1 (rdiA), found in Dictyostelium discoideum (Social amoeba).